A 192-amino-acid polypeptide reads, in one-letter code: Protein GrpE (192 aa).

Belongs to the GrpE family. In terms of assembly, homodimer.

Its subcellular location is the cytoplasm. Functionally, participates actively in the response to hyperosmotic and heat shock by preventing the aggregation of stress-denatured proteins, in association with DnaK and GrpE. It is the nucleotide exchange factor for DnaK and may function as a thermosensor. Unfolded proteins bind initially to DnaJ; upon interaction with the DnaJ-bound protein, DnaK hydrolyzes its bound ATP, resulting in the formation of a stable complex. GrpE releases ADP from DnaK; ATP binding to DnaK triggers the release of the substrate protein, thus completing the reaction cycle. Several rounds of ATP-dependent interactions between DnaJ, DnaK and GrpE are required for fully efficient folding. The protein is Protein GrpE of Neisseria gonorrhoeae (strain ATCC 700825 / FA 1090).